Consider the following 1227-residue polypeptide: DNA-directed RNA polymerase subunit beta (1227 aa).

This sequence belongs to the RNA polymerase beta chain family. The RNAP catalytic core consists of 2 alpha, 1 beta, 1 beta' and 1 omega subunit. When a sigma factor is associated with the core the holoenzyme is formed, which can initiate transcription.

The enzyme catalyses RNA(n) + a ribonucleoside 5'-triphosphate = RNA(n+1) + diphosphate. In terms of biological role, DNA-dependent RNA polymerase catalyzes the transcription of DNA into RNA using the four ribonucleoside triphosphates as substrates. This chain is DNA-directed RNA polymerase subunit beta, found in Chloroflexus aggregans (strain MD-66 / DSM 9485).